A 446-amino-acid polypeptide reads, in one-letter code: Bifunctional protein GlmU (446 aa).

Positions 1–226 (MLAIAILAAG…PFEIKGINDR (226 aa)) are pyrophosphorylase. UDP-N-acetyl-alpha-D-glucosamine is bound by residues 7–10 (LAAG), lysine 21, glutamine 73, and 78–79 (GT). Aspartate 103 is a Mg(2+) binding site. Positions 140, 155, 170, and 224 each coordinate UDP-N-acetyl-alpha-D-glucosamine. Residue asparagine 224 participates in Mg(2+) binding. The interval 227–247 (VQLSECEHYIQEELKSLWMSK) is linker. The tract at residues 248–446 (GVSFVDPISC…SKAIIRTKAD (199 aa)) is N-acetyltransferase. UDP-N-acetyl-alpha-D-glucosamine-binding residues include arginine 329 and lysine 347. Residue histidine 359 is the Proton acceptor of the active site. The UDP-N-acetyl-alpha-D-glucosamine site is built by tyrosine 362 and asparagine 373. Acetyl-CoA is bound by residues alanine 376, alanine 419, and arginine 436.

In the N-terminal section; belongs to the N-acetylglucosamine-1-phosphate uridyltransferase family. It in the C-terminal section; belongs to the transferase hexapeptide repeat family. In terms of assembly, homotrimer. The cofactor is Mg(2+).

The protein resides in the cytoplasm. It catalyses the reaction alpha-D-glucosamine 1-phosphate + acetyl-CoA = N-acetyl-alpha-D-glucosamine 1-phosphate + CoA + H(+). The enzyme catalyses N-acetyl-alpha-D-glucosamine 1-phosphate + UTP + H(+) = UDP-N-acetyl-alpha-D-glucosamine + diphosphate. The protein operates within nucleotide-sugar biosynthesis; UDP-N-acetyl-alpha-D-glucosamine biosynthesis; N-acetyl-alpha-D-glucosamine 1-phosphate from alpha-D-glucosamine 6-phosphate (route II): step 2/2. Its pathway is nucleotide-sugar biosynthesis; UDP-N-acetyl-alpha-D-glucosamine biosynthesis; UDP-N-acetyl-alpha-D-glucosamine from N-acetyl-alpha-D-glucosamine 1-phosphate: step 1/1. It participates in bacterial outer membrane biogenesis; LPS lipid A biosynthesis. Its function is as follows. Catalyzes the last two sequential reactions in the de novo biosynthetic pathway for UDP-N-acetylglucosamine (UDP-GlcNAc). The C-terminal domain catalyzes the transfer of acetyl group from acetyl coenzyme A to glucosamine-1-phosphate (GlcN-1-P) to produce N-acetylglucosamine-1-phosphate (GlcNAc-1-P), which is converted into UDP-GlcNAc by the transfer of uridine 5-monophosphate (from uridine 5-triphosphate), a reaction catalyzed by the N-terminal domain. In Prochlorococcus marinus (strain NATL2A), this protein is Bifunctional protein GlmU.